We begin with the raw amino-acid sequence, 382 residues long: Beta-1,4-galactosyltransferase 6 (382 aa).

The Cytoplasmic segment spans residues 1–15 (MSALKRMMRVSNRSL). The helical; Signal-anchor for type II membrane protein transmembrane segment at 16–35 (IAFIFFFSLSTSCLYFIYVA) threads the bilayer. Topologically, residues 36–382 (PGIANTYLFM…MPELAPIEDY (347 aa)) are lumenal. N-linked (GlcNAc...) asparagine glycans are attached at residues N71, N75, N83, N84, N99, and N122. C108 and C152 are oxidised to a cystine. Residues 163-167 (PFRNR), 202-204 (FNR), 229-230 (VD), Y258, and W290 each bind UDP-alpha-D-galactose. A disulfide bridge connects residues C223 and C242. D230 serves as a coordination point for Mn(2+). Residue 292 to 295 (GEDD) coordinates N-acetyl-D-glucosamine. N307 carries an N-linked (GlcNAc...) asparagine glycan. H323 is a Mn(2+) binding site. 323-324 (HH) is a UDP-alpha-D-galactose binding site. R334 is an N-acetyl-D-glucosamine binding site. N367 carries an N-linked (GlcNAc...) asparagine glycan.

Belongs to the glycosyltransferase 7 family. Requires Mn(2+) as cofactor. It depends on Mg(2+) as a cofactor. The cofactor is Ca(2+). In terms of tissue distribution, brain and kidney.

It is found in the golgi apparatus. Its subcellular location is the golgi stack membrane. It carries out the reaction a beta-D-glucosyl-(1&lt;-&gt;1')-N-acylsphing-4-enine + UDP-alpha-D-galactose = a beta-D-Gal-(1-&gt;4)-beta-D-Glc-(1&lt;-&gt;1)-Cer(d18:1(4E)) + UDP + H(+). The protein operates within protein modification; protein glycosylation. It participates in sphingolipid metabolism. With respect to regulation, inhibited by EDTA. Its function is as follows. Catalyzes the synthesis of lactosylceramide (LacCer) via the transfer of galactose from UDP-galactose to glucosylceramide (GlcCer). LacCer is the starting point in the biosynthesis of all gangliosides (membrane-bound glycosphingolipids) which play pivotal roles in the CNS including neuronal maturation and axonal and myelin formation. The polypeptide is Beta-1,4-galactosyltransferase 6 (Mus musculus (Mouse)).